A 409-amino-acid polypeptide reads, in one-letter code: UV excision repair protein RAD23 homolog B (409 aa).

A Ubiquitin-like domain is found at 1 to 79; sequence MQVTLKTLQQ…VVVMVTKPKA (79 aa). The segment at 80-175 is disordered; that stretch reads VSTPAPATTQ…STSGDSSRSN (96 aa). The segment covering 81 to 143 has biased composition (low complexity); sequence STPAPATTQQ…SSEPAPASAA (63 aa). Residues 144 to 153 are compositionally biased toward basic and acidic residues; the sequence is KQEKPAEKPA. The residue at position 155 (T155) is a Phosphothreonine. At S160 the chain carries Phosphoserine. Residues 160–175 are compositionally biased toward polar residues; the sequence is SPTATDSTSGDSSRSN. A Phosphothreonine modification is found at T164. S174 carries the post-translational modification Phosphoserine. T186 bears the Phosphothreonine mark. A UBA 1 domain is found at 188–228; the sequence is QSYENMVTEIMSMGYEREQVIAALRASFNNPDRAVEYLLMG. Phosphoserine is present on S199. At Y202 the chain carries Phosphotyrosine. Positions 236–276 are disordered; it reads QAVVDPPQAASTGAPQSSAVAAAAATTTATTTTTSSGGHPL. The span at 252 to 271 shows a compositional bias: low complexity; sequence SSAVAAAAATTTATTTTTSS. In terms of domain architecture, STI1 spans 274 to 317; the sequence is HPLEFLRNQPQFQQMRQIIQQNPSLLPALLQQIGRENPQLLQQI. Positions 364-404 constitute a UBA 2 domain; the sequence is PQEKEAIERLKALGFPEGLVIQAYFACEKNENLAANFLLQQ.

It belongs to the RAD23 family. As to quaternary structure, component of the XPC complex composed of XPC, RAD23B and CETN2. Interacts with NGLY1 and PSMC1. Interacts with ATXN3. Interacts with PSMD4 and PSMC5. Interacts with AMFR. Interacts with VCP; the interaction is indirect and mediated by NGLY1.

The protein localises to the nucleus. The protein resides in the cytoplasm. In terms of biological role, multiubiquitin chain receptor involved in modulation of proteasomal degradation. Binds to polyubiquitin chains. Proposed to be capable to bind simultaneously to the 26S proteasome and to polyubiquitinated substrates and to deliver ubiquitinated proteins to the proteasome. May play a role in endoplasmic reticulum-associated degradation (ERAD) of misfolded glycoproteins by association with PNGase and delivering deglycosylated proteins to the proteasome. Involved in global genome nucleotide excision repair (GG-NER) by acting as component of the XPC complex. Cooperatively with CETN2 appears to stabilize XPC. May protect XPC from proteasomal degradation. Its function is as follows. The XPC complex is proposed to represent the first factor bound at the sites of DNA damage and together with other core recognition factors, XPA, RPA and the TFIIH complex, is part of the pre-incision (or initial recognition) complex. The XPC complex recognizes a wide spectrum of damaged DNA characterized by distortions of the DNA helix such as single-stranded loops, mismatched bubbles or single-stranded overhangs. The orientation of XPC complex binding appears to be crucial for inducing a productive NER. XPC complex is proposed to recognize and to interact with unpaired bases on the undamaged DNA strand which is followed by recruitment of the TFIIH complex and subsequent scanning for lesions in the opposite strand in a 5'-to-3' direction by the NER machinery. Cyclobutane pyrimidine dimers (CPDs) which are formed upon UV-induced DNA damage esacpe detection by the XPC complex due to a low degree of structural perurbation. Instead they are detected by the UV-DDB complex which in turn recruits and cooperates with the XPC complex in the respective DNA repair. In vitro, the XPC:RAD23B dimer is sufficient to initiate NER; it preferentially binds to cisplatin and UV-damaged double-stranded DNA and also binds to a variety of chemically and structurally diverse DNA adducts. XPC:RAD23B contacts DNA both 5' and 3' of a cisplatin lesion with a preference for the 5' side. XPC:RAD23B induces a bend in DNA upon binding. XPC:RAD23B stimulates the activity of DNA glycosylases TDG and SMUG1. The polypeptide is UV excision repair protein RAD23 homolog B (RAD23B) (Homo sapiens (Human)).